A 632-amino-acid chain; its full sequence is Palmitoyltransferase ZDHHC17 (632 aa).

Topologically, residues 1–304 (MQREEGFNTK…LKADKEFRQK (304 aa)) are cytoplasmic. The necessary and sufficient for interaction with DNAJC5 and SNAP25 stretch occupies residues 11-305 (MADGPDEYET…KADKEFRQKV (295 aa)). 7 ANK repeats span residues 51-86 (THID…VRQP), 89-118 (ENVT…IVDQ), 123-152 (LNST…DPSL), 156-185 (EGCS…DVDM), 189-219 (NGMT…SVNL), 224-253 (HKNT…NVDA), and 257-286 (KGES…AKGY). Helical transmembrane passes span 305 to 325 (VMLG…DLDI) and 326 to 346 (DSWL…QFLS). The Cytoplasmic segment spans residues 347–357 (KSFFDHSMHSA). Residues 358-378 (LPLGIYLATKFWMYVTWFFWF) traverse the membrane as a helical segment. At 379 to 381 (WND) the chain is on the lumenal side. Residues 382–402 (LNFLFIHLPFLANSVALFYNF) form a helical membrane-spanning segment. The Cytoplasmic portion of the chain corresponds to 403 to 480 (GKSWKSDPGI…GNCVGAGNHR (78 aa)). A DHHC domain is found at 437–487 (IFCSTCLIRKPVRSKHCGVCNRCIAKFDHHCPWVGNCVGAGNHRYFMGYLF). Residue Cys-467 is the S-palmitoyl cysteine intermediate of the active site. The chain crosses the membrane as a helical span at residues 481 to 501 (YFMGYLFFLLFMICWMIYGCV). The Lumenal portion of the chain corresponds to 502-529 (SYWGLHCETTYTKDGFWTYITQIATCSP). The chain crosses the membrane as a helical span at residues 530-550 (WMFWMFLNSVFHFLWVAVLLM). Residues 551–632 (CQLYQITCLG…QISGSGYQLV (82 aa)) are Cytoplasmic-facing.

It belongs to the DHHC palmitoyltransferase family. AKR/ZDHHC17 subfamily. As to quaternary structure, interacts (via ANK repeats) with numerous proteins (via the consensus sequence motif [VIAP]-[VIT]-x-x-Q-P). Interacts (via ANK repeats) with CLIP3. Interacts (via ANK repeats) with HTT. Interacts (via ANK repeats) with DNAJC5 (via C-terminus). Interacts (via ANK repeats) with MAP6. Interacts (via ANK repeats) with SNAP23. Interacts (via ANK repeats) with SNAP25. Interacts (via ANK repeats) with EVL. Interacts with SPRED1 and SPRED3. Interacts with GPM6A and OPTN. May interact (via ANK repeats) with SPRED2. May interact with NTRK1; may regulate its localization and function. Autopalmitoylated. Autopalmitoylation has a regulatory role in ZDHHC17-mediated Mg(2+) transport. Expressed in liver, testis, kidney, heart, pancreas and brain. Highest expression was seen in the brain. Localized predominantly in the perinuclear regions of neurons from the cortex, striatum and hippocampus. Colocalized with HTT in the medium spiny neurons of the striatum and the spiny neurons that project into the globus pallidus.

It localises to the golgi apparatus membrane. It is found in the cytoplasmic vesicle membrane. The protein localises to the presynaptic cell membrane. It carries out the reaction L-cysteinyl-[protein] + hexadecanoyl-CoA = S-hexadecanoyl-L-cysteinyl-[protein] + CoA. The catalysed reaction is L-cysteinyl-[protein] + tetradecanoyl-CoA = S-tetradecanoyl-L-cysteinyl-[protein] + CoA. It catalyses the reaction L-cysteinyl-[protein] + octadecanoyl-CoA = S-octadecanoyl-L-cysteinyl-[protein] + CoA. In terms of biological role, palmitoyltransferase that catalyzes the addition of palmitate onto various protein substrates and is involved in a variety of cellular processes. Has no stringent fatty acid selectivity and in addition to palmitate can also transfer onto target proteins myristate from tetradecanoyl-CoA and stearate from octadecanoyl-CoA. Palmitoyltransferase specific for a subset of neuronal proteins, including SNAP25, DLG4/PSD95, GAD2, SYT1 and HTT. Also palmitoylates neuronal protein GPM6A as well as SPRED1 and SPRED3. Could also play a role in axonogenesis through the regulation of NTRK1 and the downstream ERK1/ERK2 signaling cascade. May be involved in the sorting or targeting of critical proteins involved in the initiating events of endocytosis at the plasma membrane. May play a role in Mg(2+) transport. Could also palmitoylate DNAJC5 and regulate its localization to the Golgi membrane. Palmitoylates CASP6, thereby preventing its dimerization and subsequent activation. In Mus musculus (Mouse), this protein is Palmitoyltransferase ZDHHC17.